Here is a 70-residue protein sequence, read N- to C-terminus: Plasticin-S1 (70 aa).

The N-terminal stretch at 1–22 (MAFLKKSLFLVLFLALVPLSIC) is a signal peptide. Residues 23-45 (EEEKREGENEKEQEDDNQSEEKR) constitute a propeptide that is removed on maturation. The interval 25 to 45 (EKREGENEKEQEDDNQSEEKR) is disordered.

Belongs to the frog skin active peptide (FSAP) family. Plasticin subfamily. Expressed by the skin glands.

Its subcellular location is the secreted. In terms of biological role, the native peptide is a cationic amphipathic alpha-helical antimicrobial peptide with potent activity against both Gram-positive and Gram-negative bacteria. It has weak activity against fungi and shows low hemolytic activity. The sequence is that of Plasticin-S1 from Phyllomedusa sauvagei (Sauvage's leaf frog).